The primary structure comprises 401 residues: Probable cysteine desulfurase (401 aa).

Position 223 is an N6-(pyridoxal phosphate)lysine (lysine 223).

The protein belongs to the class-V pyridoxal-phosphate-dependent aminotransferase family. Csd subfamily. It depends on pyridoxal 5'-phosphate as a cofactor.

It catalyses the reaction (sulfur carrier)-H + L-cysteine = (sulfur carrier)-SH + L-alanine. Functionally, catalyzes the removal of elemental sulfur and selenium atoms from L-cysteine, L-cystine, L-selenocysteine, and L-selenocystine to produce L-alanine. The protein is Probable cysteine desulfurase (csd) of Pseudomonas aeruginosa (strain ATCC 15692 / DSM 22644 / CIP 104116 / JCM 14847 / LMG 12228 / 1C / PRS 101 / PAO1).